The primary structure comprises 240 residues: LexA repressor (240 aa).

Residues 26 to 46 constitute a DNA-binding region (H-T-H motif); the sequence is FDEMKDALDLASKSGIHRLIT. Positions 78 to 113 are disordered; sequence QPRRGFSPSVIEGSLGKPQPVQPPAPAKPANDENNS. Residues Ser160 and Lys198 each act as for autocatalytic cleavage activity in the active site.

Belongs to the peptidase S24 family. Homodimer.

It catalyses the reaction Hydrolysis of Ala-|-Gly bond in repressor LexA.. Functionally, represses a number of genes involved in the response to DNA damage (SOS response), including recA and lexA. In the presence of single-stranded DNA, RecA interacts with LexA causing an autocatalytic cleavage which disrupts the DNA-binding part of LexA, leading to derepression of the SOS regulon and eventually DNA repair. The sequence is that of LexA repressor from Rhizobium rhizogenes (strain K84 / ATCC BAA-868) (Agrobacterium radiobacter).